An 85-amino-acid chain; its full sequence is UPF0386 protein Plav_1374 (85 aa).

Belongs to the UPF0386 family.

The polypeptide is UPF0386 protein Plav_1374 (Parvibaculum lavamentivorans (strain DS-1 / DSM 13023 / NCIMB 13966)).